The primary structure comprises 83 residues: Cell division topological specificity factor (83 aa).

The protein belongs to the MinE family.

Its function is as follows. Prevents the cell division inhibition by proteins MinC and MinD at internal division sites while permitting inhibition at polar sites. This ensures cell division at the proper site by restricting the formation of a division septum at the midpoint of the long axis of the cell. The chain is Cell division topological specificity factor from Buchnera aphidicola subsp. Schizaphis graminum (strain Sg).